The following is a 222-amino-acid chain: Putative cobalt transport protein CbiM (222 aa).

6 consecutive transmembrane segments (helical) span residues 8-28 (LPMEWAIVWYIISAIVVGYGI), 43-63 (PLLAISGAFMFVLSSLKLPSV), 75-95 (LGAILFGPAITSVLATIVLLF), 107-127 (TLGANIFSMGIMGPFVGYLVF), 134-154 (LNITWVVMLTAIFADWATYLT), and 178-198 (IFAITQIPLAIAEGLITALLW).

This sequence belongs to the CbiM family. In terms of assembly, forms an energy-coupling factor (ECF) transporter complex composed of an ATP-binding protein (A component, CbiO), a transmembrane protein (T component, CbiQ) and 2 possible substrate-capture proteins (S components, CbiM and CbiN) of unknown stoichimetry.

Its subcellular location is the cell membrane. It participates in cofactor biosynthesis; adenosylcobalamin biosynthesis. Functionally, part of the energy-coupling factor (ECF) transporter complex CbiMNOQ involved in cobalt import. This chain is Putative cobalt transport protein CbiM, found in Methanococcus voltae (strain ATCC BAA-1334 / A3).